The chain runs to 505 residues: Maturase K (505 aa).

Belongs to the intron maturase 2 family. MatK subfamily.

It is found in the plastid. The protein localises to the chloroplast. Usually encoded in the trnK tRNA gene intron. Probably assists in splicing its own and other chloroplast group II introns. The protein is Maturase K of Chiococca alba (West Indian milkberry).